The following is a 461-amino-acid chain: PE-PGRS family protein PE_PGRS45 (461 aa).

Positions 4-92 (VNVAPQLVST…GSTYAVAEAA (89 aa)) constitute a PE domain. 2 disordered regions span residues 232–251 (GGAG…GGNG) and 426–461 (AGSL…GADG). Residues 434 to 446 (PGFGGPGGSGGAS) are compositionally biased toward gly residues.

Belongs to the mycobacterial PE family. PGRS subfamily. In terms of assembly, interacts with human TIMM23, which is part of a complex that mediates the translocation of transit peptide-containing proteins across the mitochondrial inner membrane.

Its subcellular location is the cell membrane. It localises to the secreted. The protein resides in the cell wall. It is found in the host mitochondrion. It catalyses the reaction hexadecanal + NADP(+) + CoA = hexadecanoyl-CoA + NADPH + H(+). Oxidoreductase activity is inhibited by the first line anti-tubercular drug isoniazid (INH). In terms of biological role, may be an effector protein that contributes to pathogenesis by targeting host mitochondria, where it modulates host cellular processes. In THP1 macrophages, increases the ADP-to-ATP ratio and increases the cellular ROS levels. Also induces mitochondrial perturbations through membrane depolarization, release of mitochondrial superoxide, up-regulation of expression of host proapoptotic proteins (BAX and BIM) and release of cytochrome C into the cytosol. May bind calcium to increase intracellular calcium influx, which may further lead to mitochondrial perturbations. Mitochondrial perturbations and alteration of Ca(2+) influx are independent but simultaneous events. Its function is as follows. In vitro, shows NADPH-dependent fatty acyl coenzyme A oxidoreductase activity. Can oxidize palmitoyl-CoA, but not glutathione and thiourea. The polypeptide is PE-PGRS family protein PE_PGRS45 (Mycobacterium tuberculosis (strain ATCC 25618 / H37Rv)).